Here is a 315-residue protein sequence, read N- to C-terminus: Ribosomal RNA small subunit methyltransferase H (315 aa).

Residues 37 to 39 (GGH), D57, F83, D105, and Q112 contribute to the S-adenosyl-L-methionine site.

Belongs to the methyltransferase superfamily. RsmH family.

The protein localises to the cytoplasm. The catalysed reaction is cytidine(1402) in 16S rRNA + S-adenosyl-L-methionine = N(4)-methylcytidine(1402) in 16S rRNA + S-adenosyl-L-homocysteine + H(+). Its function is as follows. Specifically methylates the N4 position of cytidine in position 1402 (C1402) of 16S rRNA. The protein is Ribosomal RNA small subunit methyltransferase H of Pseudomonas fluorescens (strain Pf0-1).